The sequence spans 77 residues: Protein KleA (77 aa).

It to E.coli KleC (kcrB1).

The chain is Protein KleA (kleA) from Escherichia coli.